A 172-amino-acid polypeptide reads, in one-letter code: Ribosome maturation factor RimM (172 aa).

The PRC barrel domain occupies 97–170; that stretch reads ENEFYFHEII…KITIEVMEGL (74 aa).

The protein belongs to the RimM family. As to quaternary structure, binds ribosomal protein uS19.

It is found in the cytoplasm. In terms of biological role, an accessory protein needed during the final step in the assembly of 30S ribosomal subunit, possibly for assembly of the head region. Essential for efficient processing of 16S rRNA. May be needed both before and after RbfA during the maturation of 16S rRNA. It has affinity for free ribosomal 30S subunits but not for 70S ribosomes. The protein is Ribosome maturation factor RimM of Listeria innocua serovar 6a (strain ATCC BAA-680 / CLIP 11262).